We begin with the raw amino-acid sequence, 261 residues long: uncharacterized protein (261 aa).

The protein localises to the plastid. The protein resides in the chloroplast. This is an uncharacterized protein from Mesostigma viride (Green alga).